We begin with the raw amino-acid sequence, 1414 residues long: DNA-directed RNA polymerase subunit beta' (1414 aa).

Zn(2+) is bound by residues C72, C74, C87, and C90. Residues D463, D465, and D467 each coordinate Mg(2+). Zn(2+) is bound by residues C811, C885, C892, and C895.

The protein belongs to the RNA polymerase beta' chain family. The RNAP catalytic core consists of 2 alpha, 1 beta, 1 beta' and 1 omega subunit. When a sigma factor is associated with the core the holoenzyme is formed, which can initiate transcription. Mg(2+) serves as cofactor. Requires Zn(2+) as cofactor.

The enzyme catalyses RNA(n) + a ribonucleoside 5'-triphosphate = RNA(n+1) + diphosphate. Functionally, DNA-dependent RNA polymerase catalyzes the transcription of DNA into RNA using the four ribonucleoside triphosphates as substrates. This is DNA-directed RNA polymerase subunit beta' from Roseobacter denitrificans (strain ATCC 33942 / OCh 114) (Erythrobacter sp. (strain OCh 114)).